A 105-amino-acid chain; its full sequence is Precursor of CEP15 (105 aa).

The N-terminal stretch at 1 to 29 (MDATKIKFDVILLSFLLIISGIPSNLGLS) is a signal peptide. The propeptide occupies 30-90 (TSVRGTTRSE…PSPPVPDYDD (61 aa)). Positions 68–80 (DYYDGGSSSSTTS) are enriched in low complexity. Residues 68–105 (DYYDGGSSSSTTSPSPPVPDYDDIYRRQGDVPSPGIGH) form a disordered region. 2 positions are modified to hydroxyproline: Pro-99 and Pro-101.

The protein belongs to the C-terminally encoded plant signaling peptide (CEP) family. Interacts with CEP receptors (e.g. CEPR1 and CEPR2). The mature small signaling peptide is generated by proteolytic processing of the longer precursor.

It is found in the secreted. The protein resides in the extracellular space. It localises to the apoplast. Its function is as follows. Extracellular signaling peptide that may regulate primary root growth rate and systemic nitrogen (N)-demand signaling. This Arabidopsis thaliana (Mouse-ear cress) protein is Precursor of CEP15.